The chain runs to 410 residues: MTVKIYGSGGSGTVALPSSKSFTQRYILGSVFLNKSVTLNYVTITGDDSIALDIAQRAGANITMNDSSIKIRTSFTCPSDIYVGESATSYRIALGLLGSAGCITHVKGDPDLAKRPMDPLVKALEANDVHLKLNEDGFYDVDGSESKKRYIEVDGVSSQFVSSMIFYYARKGGGEFLVKNMRSPGYVYITKRVLYDLGYFVNIEKTITINPSGVWKTAIDVEPDYSSLAFFLVLGLLSENVDVRFNIKRMSRIQPDSVLLDMFKDNIAIDRDTLRVLPGIRDRITVDADHNPDLCPPISVIGIFSEHGVEIDNYARLKTKESNRYEGIIDMASRFGAIVEDNGKDLFIKRGDLKDPGTLSYTDHRMIMSAAVAAAASGFEVEIENETKVSKSFPGFFKELSKFANVSESN.

Residues lysine 20, serine 21, and arginine 25 each contribute to the 3-phosphoshikimate site. A phosphoenolpyruvate-binding site is contributed by lysine 20. Position 115 (arginine 115) interacts with phosphoenolpyruvate. Residues serine 157, serine 158, glutamine 159, serine 183, aspartate 293, and lysine 320 each coordinate 3-phosphoshikimate. Glutamine 159 is a binding site for phosphoenolpyruvate. Residue aspartate 293 is the Proton acceptor of the active site. Positions 324, 365, and 391 each coordinate phosphoenolpyruvate.

The protein belongs to the EPSP synthase family. Monomer.

The protein localises to the cytoplasm. It carries out the reaction 3-phosphoshikimate + phosphoenolpyruvate = 5-O-(1-carboxyvinyl)-3-phosphoshikimate + phosphate. Its pathway is metabolic intermediate biosynthesis; chorismate biosynthesis. Functionally, catalyzes the transfer of the enolpyruvyl moiety of phosphoenolpyruvate (PEP) to the 5-hydroxyl of shikimate-3-phosphate (S3P) to produce enolpyruvyl shikimate-3-phosphate and inorganic phosphate. This chain is 3-phosphoshikimate 1-carboxyvinyltransferase, found in Thermoplasma acidophilum (strain ATCC 25905 / DSM 1728 / JCM 9062 / NBRC 15155 / AMRC-C165).